We begin with the raw amino-acid sequence, 500 residues long: Glycerol-3-phosphate acyltransferase 7 (500 aa).

2 consecutive transmembrane segments (helical) span residues 38–58 (GLIRFATLLFLWPIIALLDVL) and 235–255 (ALIILLWIPFGIILAMIRIFV). Residues 298-303 (HRTLMD) carry the HXXXXD motif motif.

It belongs to the GPAT/DAPAT family. In terms of tissue distribution, weakly or not expressed in roots, leaves, seedlings, developing siliques and flower buds.

The protein localises to the membrane. The enzyme catalyses sn-glycerol 3-phosphate + an acyl-CoA = a 1-acyl-sn-glycero-3-phosphate + CoA. The protein operates within phospholipid metabolism; CDP-diacylglycerol biosynthesis; CDP-diacylglycerol from sn-glycerol 3-phosphate: step 1/3. In terms of biological role, esterifies acyl-group from acyl-ACP to the sn-1 position of glycerol-3-phosphate, an essential step in glycerolipid biosynthesis. This Arabidopsis thaliana (Mouse-ear cress) protein is Glycerol-3-phosphate acyltransferase 7 (GPAT7).